The primary structure comprises 55 residues: Histone H1 (55 aa).

Residues 1–15 (MAEVAPAPAAAAPAK) are compositionally biased toward low complexity. The tract at residues 1–28 (MAEVAPAPAAAAPAKAPKKKAAAKPKKA) is disordered. Ala2 carries the N-acetylalanine modification. Residues 16-27 (APKKKAAAKPKK) show a composition bias toward basic residues. One can recognise an H15 domain in the interval 28 to 55 (AGPSVGELIVKAVSASKERSGVSLAALK).

Belongs to the histone H1/H5 family.

It localises to the nucleus. The protein resides in the chromosome. The protein localises to the secreted. Functionally, histones H1 are necessary for the condensation of nucleosome chains into higher-order structures. In terms of biological role, SAMP H1 has antibacterial activity against Gram-negative bacteria E.coli, A.salmonicida subsp salmonicida, V.anguillarum and S.typhimurium and Gram-positive bacteria B.subtilis and L.ivanovii. The polypeptide is Histone H1 (Salmo salar (Atlantic salmon)).